The following is a 480-amino-acid chain: Vinorine hydroxylase (480 aa).

Residues 3–23 (LLQILLAIAGLLAILLLQKQW) traverse the membrane as a helical segment. Cysteine 418 lines the heme pocket.

Belongs to the cytochrome P450 family. Requires heme as cofactor. In terms of tissue distribution, mainly expressed in roots and, to a lesser extent, in leaves.

It is found in the membrane. The catalysed reaction is vinorine + reduced [NADPH--hemoprotein reductase] + O2 = vomilenine + oxidized [NADPH--hemoprotein reductase] + H2O + H(+). The enzyme catalyses vomilenine = perakine. It functions in the pathway alkaloid biosynthesis; ajmaline biosynthesis. In terms of biological role, a cytochrome P450 monooxygenase involved in the biosynthesis of ajmaline-type monoterpenoid indole alkaloids (MIAs) natural products, important plant-derived pharmaceuticals used in the therapy of heart disorders. Catalyzes the hydroxylation of vinorine to vomilenine, an intermediate chemical in the biosynthesis of ajmaline. Supports also vomilenine isomerization to perakine. The sequence is that of Vinorine hydroxylase from Rauvolfia serpentina (Serpentine wood).